The chain runs to 305 residues: MKNTQTSAPIDHMISLGDNRHIRVWETLPKNQEIKRNNTIVIAAGFARRMDHFAGLAEYLANNGFHVIRYDSLNHVGLSSGEINQFSMSVGKHSLLTVIEWLKGRGIDQIGLIASSLSARIAYDVAAEINLSFLITAVGVVNLRSTLEKALKYDYLQMEINDIPEDLDFEGYNLGSKVFVTDCFDNNWDSLDSTINKTKDLDIPFIAFISNGDDWVCQQEVKKLVGNMNSDKTKIYSLIGSSHDLGENLIVLRNFYQSVTRAAIRVDSEVIDLVDDISEPNFEDLTIITVNERRLKNKIAKRNVR.

Residues Ser-116, Asp-213, and His-243 each act as charge relay system in the active site.

This sequence belongs to the LuxD family.

It functions in the pathway lipid metabolism; fatty acid reduction for biolumincescence. Acyl transferase is part of the fatty acid reductase system required for aldehyde biosynthesis; it produces fatty acids for the luminescent reaction. The chain is Acyl transferase from Photobacterium leiognathi.